A 1273-amino-acid polypeptide reads, in one-letter code: DNA-directed RNA polymerase subunit beta (1273 aa).

This sequence belongs to the RNA polymerase beta chain family. In terms of assembly, the RNAP catalytic core consists of 2 alpha, 1 beta, 1 beta' and 1 omega subunit. When a sigma factor is associated with the core the holoenzyme is formed, which can initiate transcription.

The catalysed reaction is RNA(n) + a ribonucleoside 5'-triphosphate = RNA(n+1) + diphosphate. DNA-dependent RNA polymerase catalyzes the transcription of DNA into RNA using the four ribonucleoside triphosphates as substrates. This is DNA-directed RNA polymerase subunit beta from Phytoplasma mali (strain AT).